The sequence spans 453 residues: Probable tRNA methyltransferase 9B (453 aa).

At Ser-214 the chain carries Phosphoserine.

The protein belongs to the methyltransferase superfamily.

Functionally, may modify wobble uridines in specific arginine and glutamic acid tRNAs. Acts as a tumor suppressor by promoting the expression of LIN9. The protein is Probable tRNA methyltransferase 9B (TRMT9B) of Bos taurus (Bovine).